A 201-amino-acid polypeptide reads, in one-letter code: ADP-ribosylation factor-like protein 4D (201 aa).

Residue glycine 2 is the site of N-myristoyl glycine attachment. GTP contacts are provided by residues 28 to 35 (GLDSAGKT), 76 to 80 (DVGGQ), and 135 to 138 (NKQD).

Belongs to the small GTPase superfamily. Arf family. In terms of assembly, interacts with CYTH2; the interaction is direct and ARL4D GTP-dependent. Does not interact with ARL4D.

Its subcellular location is the nucleus. The protein resides in the nucleolus. The protein localises to the cell membrane. It is found in the cytoplasm. In terms of biological role, small GTP-binding protein which cycles between an inactive GDP-bound and an active GTP-bound form, and the rate of cycling is regulated by guanine nucleotide exchange factors (GEF) and GTPase-activating proteins (GAP). GTP-binding protein that does not act as an allosteric activator of the cholera toxin catalytic subunit. Recruits CYTH1, CYTH2, CYTH3 and CYTH4 to the plasma membrane in GDP-bound form. This Mus musculus (Mouse) protein is ADP-ribosylation factor-like protein 4D (Arl4d).